We begin with the raw amino-acid sequence, 409 residues long: FADH(2)-dependent resorcinol hydroxylase, oxygenase component (409 aa).

The protein belongs to the HpaH/HsaA monooxygenase family. The FADH(2)-dependent resorcinol hydroxylase is composed of two subunits, GraA (the oxygenase component) and GraD (the reductase component). Both subunits are required for activity.

It carries out the reaction resorcinol + FADH2 + O2 = benzene-1,2,4-triol + FAD + H2O + H(+). It participates in aromatic compound metabolism. Functionally, involved in the gamma-resorcylate (2,6-dihydroxybenzoate) catabolism. Oxygenase component of the resorcinol hydroxylase, which catalyzes the FADH(2)-dependent conversion of resorcinol to hydroxyquinol. This chain is FADH(2)-dependent resorcinol hydroxylase, oxygenase component, found in Rhizobium sp. (strain MTP-10005).